Reading from the N-terminus, the 709-residue chain is FACT complex subunit SSRP1 (709 aa).

N-acetylalanine is present on alanine 2. Lysine 90 is covalently cross-linked (Glycyl lysine isopeptide (Lys-Gly) (interchain with G-Cter in SUMO2)). Residue threonine 170 is modified to Phosphothreonine. At lysine 233 the chain carries N6-acetyllysine. Glycyl lysine isopeptide (Lys-Gly) (interchain with G-Cter in SUMO2) cross-links involve residues lysine 296 and lysine 364. Lysine 413 is subject to N6-acetyllysine. Position 437 is a phosphoserine (serine 437). Tyrosine 441 is modified (phosphotyrosine). At serine 444 the chain carries Phosphoserine. Residue tyrosine 452 is modified to Phosphotyrosine. Positions 458 to 709 are disordered; the sequence is EEGKIREENA…SEDSASGSDE (252 aa). A compositionally biased stretch (acidic residues) spans 470 to 496; the sequence is SSDDSGEETDESFNPGEEEEDVAEEFD. Serine 471 is subject to Phosphoserine. Positions 497-507 are enriched in low complexity; sequence SNASASSSSNE. Serine 510 bears the Phosphoserine; by CK2 mark. Residues 515-533 are compositionally biased toward basic residues; the sequence is KKRKQLKKAKMAKDRKSRK. Basic and acidic residues-rich tracts occupy residues 534-546 and 577-624; these read KPVEVKKGKDPNA and LSKK…SSKR. The residue at position 542 (lysine 542) is an N6-acetyllysine. A DNA-binding region (HMG box) is located at residues 547–615; it reads PKRPMSAYML…DYEKAMKEYE (69 aa). A compositionally biased stretch (basic residues) spans 625–634; that stretch reads DKSKKKKKVK. Low complexity predominate over residues 643-659; sequence PSRGSSSKSSSRQLSES. Residues serine 657, serine 659, serine 667, serine 668, serine 671, serine 672, and serine 673 each carry the phosphoserine modification. A Phosphoserine; by CK2 modification is found at serine 688. Positions 696–709 are enriched in polar residues; the sequence is TPPSSEDSASGSDE.

This sequence belongs to the SSRP1 family. Interacts with MYOG (via C-terminal region). Component of the FACT complex, a stable heterodimer of SSRP1 and SUPT16H. Also a component of a CK2-SPT16-SSRP1 complex which forms following UV irradiation, composed of SSRP1, SUPT16H, CSNK2A1, CSNK2A2 and CSNK2B. Binds to histone H3-H4 tetramers, but not to intact nucleosomes. Identified in a centromere complex containing histones H2A, H2B and H4, and at least CENPA, CENPB, CENPC, CENPT, CENPN, HJURP, SUPT16H, SSRP1 and RSF1. Interacts with isoform gamma of TP63. Interacts with FYTTD1/UIF. Interacts with SRF. Interacts with NEK9. As to quaternary structure, (Microbial infection) Interacts with Herpes simplex virus 1 (HHV-1) protein ICP22; this interaction relocalizes the FACT complex to viral genomes in infected cells. Phosphorylated by CK2 following UV but not gamma irradiation. Phosphorylation inhibits its DNA-binding activity. Post-translationally, ubiquitinated. Polyubiquitinated following caspase cleavage resulting in degradation of the N-terminal ubiquitinated part of the cleaved protein. In terms of processing, sumoylated.

The protein resides in the nucleus. Its subcellular location is the nucleolus. It is found in the chromosome. Its function is as follows. Component of the FACT complex, a general chromatin factor that acts to reorganize nucleosomes. The FACT complex is involved in multiple processes that require DNA as a template such as mRNA elongation, DNA replication and DNA repair. During transcription elongation the FACT complex acts as a histone chaperone that both destabilizes and restores nucleosomal structure. It facilitates the passage of RNA polymerase II and transcription by promoting the dissociation of one histone H2A-H2B dimer from the nucleosome, then subsequently promotes the reestablishment of the nucleosome following the passage of RNA polymerase II. The FACT complex is probably also involved in phosphorylation of 'Ser-392' of p53/TP53 via its association with CK2 (casein kinase II). Binds specifically to double-stranded DNA and at low levels to DNA modified by the antitumor agent cisplatin. May potentiate cisplatin-induced cell death by blocking replication and repair of modified DNA. Also acts as a transcriptional coactivator for p63/TP63. The polypeptide is FACT complex subunit SSRP1 (SSRP1) (Homo sapiens (Human)).